We begin with the raw amino-acid sequence, 421 residues long: MLDPKLLKEKPQVIRDMLKARAVDFDLDGLIESDQKRREFIIKTDEFKKRRNEIGNEIAQKKKAGEDTSTILDEMKNVSAELAKLESQQEEIESKYAKLAFTVPNLVHESVPVGPDDTANKEMRKWGEIPQFDFKINDHIDMSENLDLVDLERAAKVAGARFYYLKNDLVRLNQSLIHFALDFLAEKEYSLVQPPYMINRSSMEGAVIADDFEEVIYKVEEEDLYMIGTSEHAMAAMHSKEIIEGKDLPIRYAGVSPCFRKEAGAHGRDQKGIFRVHQFDKIEQFVYARPEDSWKEHEKMLAVAEEFYQKLEIPHRVMLLSTGDMGKISAKTYDIEAWMAGQNSYREIVSCSNCLDYQARRLKIRFRDKTNEDTQYIHTLNSTLVATTRVLVSIMENFQTKDGHIKIPQVLQSYMGNQKEI.

229 to 231 (TSE) contributes to the L-serine binding site. Residues 260 to 262 (RKE) and Val276 contribute to the ATP site. Glu283 is an L-serine binding site. 347–350 (EIVS) is an ATP binding site. Thr383 serves as a coordination point for L-serine.

Belongs to the class-II aminoacyl-tRNA synthetase family. Type-1 seryl-tRNA synthetase subfamily. As to quaternary structure, homodimer. The tRNA molecule binds across the dimer.

It localises to the cytoplasm. It carries out the reaction tRNA(Ser) + L-serine + ATP = L-seryl-tRNA(Ser) + AMP + diphosphate + H(+). It catalyses the reaction tRNA(Sec) + L-serine + ATP = L-seryl-tRNA(Sec) + AMP + diphosphate + H(+). The protein operates within aminoacyl-tRNA biosynthesis; selenocysteinyl-tRNA(Sec) biosynthesis; L-seryl-tRNA(Sec) from L-serine and tRNA(Sec): step 1/1. In terms of biological role, catalyzes the attachment of serine to tRNA(Ser). Is also able to aminoacylate tRNA(Sec) with serine, to form the misacylated tRNA L-seryl-tRNA(Sec), which will be further converted into selenocysteinyl-tRNA(Sec). In Nitrosopumilus maritimus (strain SCM1), this protein is Serine--tRNA ligase.